We begin with the raw amino-acid sequence, 683 residues long: Translation factor guf1, mitochondrial (683 aa).

A mitochondrion-targeting transit peptide spans 1 to 43 (MRGCLQLARWLSAAPKGTAASLTRAPFVLANAPRYFTSSASRA). The tr-type G domain occupies 66-250 (ERYRNFCIVA…KIPAYGHFPV (185 aa)). Residues 75–82 (AHVDHGKS), 139–143 (DTPGH), and 193–196 (NKVD) contribute to the GTP site.

It belongs to the TRAFAC class translation factor GTPase superfamily. Classic translation factor GTPase family. LepA subfamily.

Its subcellular location is the mitochondrion inner membrane. The catalysed reaction is GTP + H2O = GDP + phosphate + H(+). Its function is as follows. Promotes mitochondrial protein synthesis. May act as a fidelity factor of the translation reaction, by catalyzing a one-codon backward translocation of tRNAs on improperly translocated ribosomes. Binds to mitochondrial ribosomes in a GTP-dependent manner. The chain is Translation factor guf1, mitochondrial (guf1) from Aspergillus fumigatus (strain ATCC MYA-4609 / CBS 101355 / FGSC A1100 / Af293) (Neosartorya fumigata).